We begin with the raw amino-acid sequence, 248 residues long: uncharacterized protein (248 aa).

The protein to M.jannaschii MJ1452.

This is an uncharacterized protein from Methanothermobacter thermautotrophicus (strain ATCC 29096 / DSM 1053 / JCM 10044 / NBRC 100330 / Delta H) (Methanobacterium thermoautotrophicum).